The following is a 513-amino-acid chain: Histidine ammonia-lyase (513 aa).

Residues 144–146 (ASG) constitute a cross-link (5-imidazolinone (Ala-Gly)). A 2,3-didehydroalanine (Ser) modification is found at S145.

The protein belongs to the PAL/histidase family. In terms of processing, contains an active site 4-methylidene-imidazol-5-one (MIO), which is formed autocatalytically by cyclization and dehydration of residues Ala-Ser-Gly.

The protein resides in the cytoplasm. The catalysed reaction is L-histidine = trans-urocanate + NH4(+). It functions in the pathway amino-acid degradation; L-histidine degradation into L-glutamate; N-formimidoyl-L-glutamate from L-histidine: step 1/3. The sequence is that of Histidine ammonia-lyase from Streptococcus pyogenes serotype M1.